Here is a 115-residue protein sequence, read N- to C-terminus: NADH-ubiquinone oxidoreductase chain 3 (115 aa).

A run of 3 helical transmembrane segments spans residues 3-23, 55-75, and 84-104; these read VMLT…IAFW, FFLV…LLPL, and LTTM…SLAY.

Belongs to the complex I subunit 3 family. In terms of assembly, core subunit of respiratory chain NADH dehydrogenase (Complex I) which is composed of 45 different subunits. Interacts with TMEM186. Interacts with TMEM242.

Its subcellular location is the mitochondrion inner membrane. It carries out the reaction a ubiquinone + NADH + 5 H(+)(in) = a ubiquinol + NAD(+) + 4 H(+)(out). In terms of biological role, core subunit of the mitochondrial membrane respiratory chain NADH dehydrogenase (Complex I) which catalyzes electron transfer from NADH through the respiratory chain, using ubiquinone as an electron acceptor. Essential for the catalytic activity of complex I. This is NADH-ubiquinone oxidoreductase chain 3 from Canis lupus familiaris (Dog).